Here is a 154-residue protein sequence, read N- to C-terminus: Deoxyuridine 5'-triphosphate nucleotidohydrolase (154 aa).

Substrate is bound by residues 64-66, Asn77, 81-83, and Lys91; these read RSG and TVD. The disordered stretch occupies residues 135 to 154; it reads LADTTRGDGGHGSSGGHASL. Residues 144–154 are compositionally biased toward gly residues; that stretch reads GHGSSGGHASL.

It belongs to the dUTPase family. In terms of assembly, homotrimer. It depends on Mg(2+) as a cofactor.

The enzyme catalyses dUTP + H2O = dUMP + diphosphate + H(+). It functions in the pathway pyrimidine metabolism; dUMP biosynthesis; dUMP from dCTP (dUTP route): step 2/2. This enzyme is involved in nucleotide metabolism: it produces dUMP, the immediate precursor of thymidine nucleotides and it decreases the intracellular concentration of dUTP so that uracil cannot be incorporated into DNA. This Mycolicibacterium vanbaalenii (strain DSM 7251 / JCM 13017 / BCRC 16820 / KCTC 9966 / NRRL B-24157 / PYR-1) (Mycobacterium vanbaalenii) protein is Deoxyuridine 5'-triphosphate nucleotidohydrolase.